Consider the following 287-residue polypeptide: Probable glucose uptake protein GlcU (287 aa).

A run of 9 helical transmembrane segments spans residues 7-29 (LIAL…VGGG), 34-56 (IRGT…FAKF), 58-75 (NPTV…WAFG), 114-136 (WSSM…GVAL), 156-178 (MGIL…IFGV), 183-202 (ALFF…SMNH), 209-228 (TALN…FMFY), 233-255 (VGVA…GGIF), and 267-286 (TGIW…LGNL).

The protein belongs to the GRP transporter (TC 2.A.7.5) family.

The protein resides in the cell membrane. Functionally, involved in the uptake of glucose. The polypeptide is Probable glucose uptake protein GlcU (glcU) (Staphylococcus aureus (strain COL)).